The chain runs to 677 residues: MPGTLFLIVGPSGVGKDTLLEGARDRLATSRWFSFPQRVVTRAADAGGEDYIPVTPSEFEQQLAAGAFWHQWHAHGLSYGIPMQVARDLDNGINVVLNASRNEIGAFRDKATHVVTIGISAPPGIVEERLHERGRESEEEIKRRLARLVEQAPLTGYALEIVNDRTIEEGITALVDLIAGACDLNAEITRFPVTIGSKQVCLVHKGNQIASRVLAGSSRVTLSLRGKSVSAELGETWSDEIVSQDLCALSEGAMAALDAVEGDVVSIERSPTPKSRSILQKKVRGGELSHAEMEAFIHDLVNGRFSTSEIAGFLVAASNNLTMDEVISLTQVRAAFAHRHDWGKAIVVDKHSMGGVPGNRITPIIIPILAAFGLTVPKTSSRAITSAAGTADMMEVLSRVDLSPDEMKSVVEQTNGCIAWNGNLTHSPVDDVMNAINRPLGLQSTLLDVSSIMSKKLAAGSTHVLIDMPVGPKAKTRTQGEAGALKNLFESVGQGIGLNTKVQISDGTKPIGRGVGPVLEALDVLSVLRGEAGAPTDLLDKSIGYAATILEWSGAVSQGQGAQVTRDLVSSGKAFEKLFEIRDAQGRQHDPLQPGQFTEDICADRSGRVEAIDIQGISEVARLSGAPKDKAAGVVLNVQVGDQIAEKQPLLRVHSSSLRGIEEAVCAAQAQSAFKIL.

The segment at 1–187 is ribose 1,5-bisphosphokinase; it reads MPGTLFLIVG…IAGACDLNAE (187 aa). Positions 188–677 are thymidinephosphorylase; the sequence is ITRFPVTIGS…AQAQSAFKIL (490 aa).

It in the N-terminal section; belongs to the ribose 1,5-bisphosphokinase family. This sequence in the C-terminal section; belongs to the thymidine/pyrimidine-nucleoside phosphorylase family. Type 2 subfamily.

The enzyme catalyses alpha-D-ribose 1,5-bisphosphate + ATP = 5-phospho-alpha-D-ribose 1-diphosphate + ADP. It catalyses the reaction thymidine + phosphate = 2-deoxy-alpha-D-ribose 1-phosphate + thymine. Its pathway is metabolic intermediate biosynthesis; 5-phospho-alpha-D-ribose 1-diphosphate biosynthesis; 5-phospho-alpha-D-ribose 1-diphosphate from D-ribose 5-phosphate (route II): step 3/3. Its function is as follows. Catalyzes the phosphorylation of ribose 1,5-bisphosphate to 5-phospho-D-ribosyl alpha-1-diphosphate (PRPP). This Roseobacter denitrificans (strain ATCC 33942 / OCh 114) (Erythrobacter sp. (strain OCh 114)) protein is Bifunctional ribose 1,5-bisphosphokinase-thymidine phosphorylase (phnN).